The sequence spans 414 residues: MEFKSGFLNTLQVRGYLHQCTDDVALDELMALQPITAYIGFDCTARSLHIGSLMQIMVMRYLQKFGHKIVVLLGGGTTKIGDPSGKDKARAMLSEAEIAANKAGILATINKFLNQGDGVVIADNAEWLGEVRYLEFLREIGSKFSVNAMLGLDSVRSRLDRDQNLSFLEFSYVLLQSYDFVELHRRHKCVLQIGGADQWGNIVNGIDLGRKLGLPQLYGLTTHLLLTSTGEKMGKTADGAVWLDAEMFDPGNYWQYFRNVADVEVGRLLRLFTELPMNEIAELENLQGEAINEAKKVLATEATAICHGKSAALAAENAALQVFEHNDDAGLPHFPLHKSLIAQGISVAKLLQLAGLEESISAGRRLIKGRGCKINGMVVEDADHALTHADFARNSGYITVFCGKKRRIKVVVED.

Residue Tyr-38 coordinates L-tyrosine. A 'HIGH' region motif is present at residues 43–52 (CTARSLHIGS). The L-tyrosine site is built by Tyr-172 and Gln-176. Residues 232 to 236 (KMGKT) carry the 'KMSKS' region motif. Lys-235 lines the ATP pocket. The 68-residue stretch at 345–412 (ISVAKLLQLA…GKKRRIKVVV (68 aa)) folds into the S4 RNA-binding domain.

This sequence belongs to the class-I aminoacyl-tRNA synthetase family. TyrS type 1 subfamily. Homodimer.

The protein localises to the cytoplasm. The enzyme catalyses tRNA(Tyr) + L-tyrosine + ATP = L-tyrosyl-tRNA(Tyr) + AMP + diphosphate + H(+). Its function is as follows. Catalyzes the attachment of tyrosine to tRNA(Tyr) in a two-step reaction: tyrosine is first activated by ATP to form Tyr-AMP and then transferred to the acceptor end of tRNA(Tyr). This Anaplasma marginale (strain St. Maries) protein is Tyrosine--tRNA ligase.